The following is a 268-amino-acid chain: Hydroxyethylthiazole kinase (268 aa).

Met47 is a substrate binding site. 2 residues coordinate ATP: Arg122 and Thr168. Position 195 (Ala195) interacts with substrate.

Belongs to the Thz kinase family. Mg(2+) serves as cofactor.

It catalyses the reaction 5-(2-hydroxyethyl)-4-methylthiazole + ATP = 4-methyl-5-(2-phosphooxyethyl)-thiazole + ADP + H(+). It participates in cofactor biosynthesis; thiamine diphosphate biosynthesis; 4-methyl-5-(2-phosphoethyl)-thiazole from 5-(2-hydroxyethyl)-4-methylthiazole: step 1/1. Functionally, catalyzes the phosphorylation of the hydroxyl group of 4-methyl-5-beta-hydroxyethylthiazole (THZ). This chain is Hydroxyethylthiazole kinase, found in Rhizobium rhizogenes (strain K84 / ATCC BAA-868) (Agrobacterium radiobacter).